The primary structure comprises 328 residues: Alanine racemase (328 aa).

The Proton acceptor; specific for D-alanine role is filled by Lys33. Lys33 bears the N6-(pyridoxal phosphate)lysine mark. Arg118 provides a ligand contact to substrate. The Proton acceptor; specific for L-alanine role is filled by Tyr237. Met283 is a binding site for substrate.

It belongs to the alanine racemase family. The cofactor is pyridoxal 5'-phosphate.

The enzyme catalyses L-alanine = D-alanine. Its pathway is amino-acid biosynthesis; D-alanine biosynthesis; D-alanine from L-alanine: step 1/1. Its function is as follows. Catalyzes the interconversion of L-alanine and D-alanine. May also act on other amino acids. The chain is Alanine racemase (alr) from Campylobacter jejuni (strain RM1221).